Here is a 140-residue protein sequence, read N- to C-terminus: MISFNYEIDFEIREETSYINWVSSVILSENKSEGEINYIFCDDNYLLEINQQYLNHDTLTDVISFDYSLGDEIHGDIYISIERVRENADDFKVPFEEELKRVMIHGVLHYCGYKDKSDADELLMRSKEDEKLKLFHVKQN.

3 residues coordinate Zn(2+): His-105, His-109, and Asp-115.

The protein belongs to the endoribonuclease YbeY family. Zn(2+) is required as a cofactor.

Its subcellular location is the cytoplasm. Functionally, single strand-specific metallo-endoribonuclease involved in late-stage 70S ribosome quality control and in maturation of the 3' terminus of the 16S rRNA. In Flavobacterium psychrophilum (strain ATCC 49511 / DSM 21280 / CIP 103535 / JIP02/86), this protein is Endoribonuclease YbeY.